We begin with the raw amino-acid sequence, 1172 residues long: Serine/threonine-protein kinase Nek10 (1172 aa).

The stretch at 209 to 251 (GAHKTLVNLLGARDTNVLLGSLLALASLAESQECREKISELNI) is one ARM repeat. Residues 481–514 (YEELVSKLNLLVEDELKQIAENIESINQNKAPLK) are a coiled coil. Residues 519–712 (YAILDHLGSG…SEPYGEKADV (194 aa)) enclose the Protein kinase domain. ATP-binding positions include 525 to 533 (LGSGAFGCV) and Lys548. Asp655 (proton acceptor) is an active-site residue. Disordered regions lie at residues 855–875 (SELSESADLPPEGFQASYGKD) and 898–954 (TYSE…GSRP). Polar residues predominate over residues 919–945 (PLKESTFNILKRSFSASGGERQSQTRD).

The protein belongs to the protein kinase superfamily. NEK Ser/Thr protein kinase family. NIMA subfamily. As to quaternary structure, interacts with RAF1 and MAP2K1; the interaction is direct with RAF1 and required for ERK1/2-signaling pathway activation in response to UV irradiation. Mg(2+) serves as cofactor. Expressed in the lung.

The enzyme catalyses L-seryl-[protein] + ATP = O-phospho-L-seryl-[protein] + ADP + H(+). It catalyses the reaction L-threonyl-[protein] + ATP = O-phospho-L-threonyl-[protein] + ADP + H(+). Plays a role in the cellular response to UV irradiation. Mediates G2/M cell cycle arrest, MEK autoactivation and ERK1/2-signaling pathway activation in response to UV irradiation. In ciliated cells of airways, it is involved in the regulation of mucociliary transport. This chain is Serine/threonine-protein kinase Nek10, found in Homo sapiens (Human).